Consider the following 80-residue polypeptide: UPF0512 protein Q (80 aa).

The protein belongs to the UPF0512 family.

This Dictyostelium discoideum (Social amoeba) protein is UPF0512 protein Q.